The following is a 283-amino-acid chain: Non-selective voltage-gated ion channel VDAC1 (283 aa).

At Ala-2 the chain carries N-acetylalanine. Lys-12 is a binding site for ATP. Lys-12 is covalently cross-linked (Glycyl lysine isopeptide (Lys-Gly) (interchain with G-Cter in ubiquitin)). Ser-13 is subject to Phosphoserine. Thr-19 is modified (phosphothreonine). Residue Lys-20 participates in ATP binding. N6-acetyllysine; alternate is present on Lys-20. Residue Lys-20 is modified to N6-succinyllysine; alternate. Residue Lys-20 forms a Glycyl lysine isopeptide (Lys-Gly) (interchain with G-Cter in ubiquitin); alternate linkage. 2 beta stranded membrane-spanning segments follow: residues 26-35 and 39-47; these read LIKLDLKTKS and LEFTSSGSA. Residues Lys-53 and Lys-61 each participate in a glycyl lysine isopeptide (Lys-Gly) (interchain with G-Cter in ubiquitin) cross-link. A beta stranded membrane pass occupies residues 54 to 64; it reads VTGSLETKYRW. Phosphotyrosine is present on Tyr-67. A run of 3 beta stranded transmembrane segments spans residues 69 to 76, 80 to 89, and 95 to 104; these read LTFTEKWN, TLGTEITVED, and LKLTFDSSFS. Thr-107 carries the phosphothreonine modification. N6-acetyllysine; alternate is present on Lys-109. Residue Lys-109 forms a Glycyl lysine isopeptide (Lys-Gly) (interchain with G-Cter in ubiquitin); alternate linkage. Lys-110 participates in a covalent cross-link: Glycyl lysine isopeptide (Lys-Gly) (interchain with G-Cter in ubiquitin). A run of 4 beta stranded transmembrane segments spans residues 111 to 120, 123 to 130, 137 to 145, and 150 to 158; these read NAKIKTGYKR, INLGCDVD, SIRGALVLG, and LAGYQMNFE. Residue Lys-161 forms a Glycyl lysine isopeptide (Lys-Gly) (interchain with G-Cter in ubiquitin) linkage. A run of 6 beta stranded transmembrane segments spans residues 163–175, 178–185, 189–198, 202–211, 218–227, and 231–238; these read RVTQSNFAVGYKT, FQLHTNVN, EFGGSIYQKV, LETAVNLAWT, RFGIAAKYQI, and ACFSAKVN. Ser-193 is subject to Phosphoserine; by NEK1. Ser-240 carries the post-translational modification Phosphoserine. 242-244 serves as a coordination point for NAD(+); sequence LIG. A beta stranded membrane pass occupies residues 242–251; that stretch reads LIGLGYTQTL. Lys-252 is subject to N6-acetyllysine. Residues 254–263 form a beta stranded membrane-spanning segment; sequence GIKLTLSALL. An NAD(+)-binding site is contributed by 260–264; the sequence is SALLD. Lys-266 bears the N6-acetyllysine; alternate mark. Residue Lys-266 forms a Glycyl lysine isopeptide (Lys-Gly) (interchain with G-Cter in ubiquitin); alternate linkage. Residues 273–282 traverse the membrane as a beta stranded segment; sequence HKLGLGLEFQ. A Glycyl lysine isopeptide (Lys-Gly) (interchain with G-Cter in ubiquitin) cross-link involves residue Lys-274.

The protein belongs to the eukaryotic mitochondrial porin family. As to quaternary structure, homodimer and homotrimer; in response to cyclic AMP or calcium; oligomerization is required for scramblase activity. Component of the mitochondrial permeability transition pore complex (mPTPC), at least composed of SPG7, VDAC1 and PPIF. Interacts with SPG7, NIPSNAP2 and SLC25A30. Interacts with hexokinases including HK1. The HK1-VDAC1 complex interacts with ATF2. Interacts with BCL2L1. Interacts with BAK1. Interacts with RTL10/BOP (via BH3 domain). Interacts with amyloid-beta and APP; induces VDAC1 dephosphorylation. Interacts with TMEM41B. Interacts with BCAP31. Interacts with HSPA9; this interaction couples ITPR1 to VDAC1. In terms of processing, phosphorylation at Ser-193 by NEK1 promotes the closed conformational state preventing excessive mitochondrial membrane permeability and subsequent apoptotic cell death after injury. Phosphorylation by the AKT-GSK3B axis stabilizes the protein probably by preventing ubiquitin-mediated proteasomal degradation. Ubiquitinated. Undergoes monoubiquitination and polyubiquitination by PRKN; monoubiquitination at Lys-274 inhibits apoptosis, whereas polyubiquitination leads to its degradation and promotes mitophagy. Deubiquitinated by USP30. As to expression, predominantly in brain astrocytes.

Its subcellular location is the mitochondrion outer membrane. The protein localises to the cell membrane. It is found in the membrane raft. The enzyme catalyses chloride(in) = chloride(out). It catalyses the reaction K(+)(in) = K(+)(out). It carries out the reaction ATP(in) = ATP(out). The catalysed reaction is Ca(2+)(in) = Ca(2+)(out). The enzyme catalyses Na(+)(in) = Na(+)(out). It catalyses the reaction Mg(2+)(in) = Mg(2+)(out). It carries out the reaction L-glutamate(out) = L-glutamate(in). The catalysed reaction is dopamine(out) = dopamine(in). The enzyme catalyses acetylcholine(in) = acetylcholine(out). It catalyses the reaction Fe(III)-[cytochrome c](out) = Fe(III)-[cytochrome c](in). It carries out the reaction a 1,2-diacyl-sn-glycero-3-phosphocholine(in) = a 1,2-diacyl-sn-glycero-3-phosphocholine(out). The catalysed reaction is a 1,2-diacyl-sn-glycero-3-phospho-L-serine(in) = a 1,2-diacyl-sn-glycero-3-phospho-L-serine(out). Its activity is regulated as follows. Inhibited by nitric oxide. Functionally, non-selective voltage-gated ion channel that mediates the transport of anions and cations through the mitochondrion outer membrane and plasma membrane. The channel at the outer mitochondrial membrane allows diffusion of small hydrophilic molecules; in the plasma membrane it is involved in cell volume regulation and apoptosis. It adopts an open conformation at low or zero membrane potential and a closed conformation at potentials above 30-40 mV. The open state has a weak anion selectivity whereas the closed state is cation-selective. Binds various signaling molecules, including the sphingolipid ceramide, the phospholipid phosphatidylcholine, and the sterols cholesterol and oxysterol. In depolarized mitochondria, acts downstream of PRKN and PINK1 to promote mitophagy or prevent apoptosis; polyubiquitination by PRKN promotes mitophagy, while monoubiquitination by PRKN decreases mitochondrial calcium influx which ultimately inhibits apoptosis. May participate in the formation of the permeability transition pore complex (PTPC) responsible for the release of mitochondrial products that triggers apoptosis. May mediate ATP export from cells. Part of a complex composed of HSPA9, ITPR1 and VDAC1 that regulates mitochondrial calcium-dependent apoptosis by facilitating calcium transport from the ER lumen to the mitochondria intermembrane space thus providing calcium for the downstream calcium channel MCU that directly releases it into mitochondria matrix. Mediates cytochrome c efflux. Catalyzes the scrambling of phospholipids across the outer mitochondrial membrane; the mechanism is unrelated to channel activity and is capable of translocating both anionic and zwitterionic phospholipids. This Bos taurus (Bovine) protein is Non-selective voltage-gated ion channel VDAC1.